The chain runs to 142 residues: Sec-independent protein translocase protein TatB (142 aa).

The helical transmembrane segment at 1–21 (MFDFGFSELVVIGVVMLIVVG) threads the bilayer. The segment at 99–142 (AAPPDNTTSAESQAAADPAAVDSSQQLELRLDTTPKQVVGSDKA) is disordered. Positions 107 to 124 (SAESQAAADPAAVDSSQQ) are enriched in low complexity.

This sequence belongs to the TatB family. The Tat system comprises two distinct complexes: a TatABC complex, containing multiple copies of TatA, TatB and TatC subunits, and a separate TatA complex, containing only TatA subunits. Substrates initially bind to the TatABC complex, which probably triggers association of the separate TatA complex to form the active translocon.

Its subcellular location is the cell inner membrane. Its function is as follows. Part of the twin-arginine translocation (Tat) system that transports large folded proteins containing a characteristic twin-arginine motif in their signal peptide across membranes. Together with TatC, TatB is part of a receptor directly interacting with Tat signal peptides. TatB may form an oligomeric binding site that transiently accommodates folded Tat precursor proteins before their translocation. The chain is Sec-independent protein translocase protein TatB from Azoarcus sp. (strain BH72).